The chain runs to 325 residues: Coiled-coil domain-containing protein 160 (325 aa).

Disordered regions lie at residues 18–45 (SAQD…KGME) and 81–123 (ENKR…CSTD). The span at 81–91 (ENKRNISKNET) shows a compositional bias: basic and acidic residues. The span at 92–123 (DTNSASYESSNVDVTTEESFNSTEDNSTCSTD) shows a compositional bias: polar residues. Positions 144-288 (KLCLNLLNEE…SVIKNELRTE (145 aa)) form a coiled coil.

It belongs to the CCDC160 family.

This is Coiled-coil domain-containing protein 160 (CCDC160) from Homo sapiens (Human).